The chain runs to 122 residues: Allatotropin (122 aa).

Residues 1-23 (MRVILAITLLFVAGSFIATASKG) form the signal peptide. The propeptide occupies 24–40 (RNYPRFFKHRMKLREIR). Phe-53 carries the phenylalanine amide modification. A propeptide spanning residues 57–122 (ESPAERIPDL…GDDSKKGTIA (66 aa)) is cleaved from the precursor.

Expressed in brain and ventral ganglia but not in the retrocerebral complex (at protein level).

Its subcellular location is the secreted. Neuropeptide stimulator of juvenile hormone synthesis. This is Allatotropin from Camponotus floridanus (Florida carpenter ant).